The sequence spans 519 residues: cAMP-dependent protein kinase catalytic subunit (519 aa).

Residues Met1–Ala195 form a disordered region. 3 stretches are compositionally biased toward polar residues: residues Pro10–Leu25, Val116–Ile159, and Thr173–Lys191. The Protein kinase domain occupies Phe208–Phe463. ATP contacts are provided by residues Leu214–Val222 and Lys237. Asp331 (proton acceptor) is an active-site residue. The AGC-kinase C-terminal domain occupies Ala464–Phe519.

The protein belongs to the protein kinase superfamily. Ser/Thr protein kinase family.

It catalyses the reaction L-seryl-[protein] + ATP = O-phospho-L-seryl-[protein] + ADP + H(+). The catalysed reaction is L-threonyl-[protein] + ATP = O-phospho-L-threonyl-[protein] + ADP + H(+). Its activity is regulated as follows. Activated by cAMP. Functionally, functions downstream of adenylate cyclase to regulate trap-development for nematode capture. The sequence is that of cAMP-dependent protein kinase catalytic subunit from Arthrobotrys oligospora (strain ATCC 24927 / CBS 115.81 / DSM 1491) (Nematode-trapping fungus).